The following is a 148-amino-acid chain: uncharacterized protein (148 aa).

2 CBS domains span residues 8 to 68 and 74 to 130; these read MTAD…PNSQ and MTEK…ERAG. A disordered region spans residues 127–148; the sequence is ERAGSALSDISEGDNREEGFFH. Positions 139-148 are enriched in basic and acidic residues; that stretch reads GDNREEGFFH.

This is an uncharacterized protein from Bacillus subtilis (strain 168).